Consider the following 158-residue polypeptide: C-type lection lectoxin-Enh3 (158 aa).

An N-terminal signal peptide occupies residues 1-23; the sequence is MGQFTVVSLGLLAMFLSLSGAKG. 3 disulfide bridges follow: Cys26/Cys37, Cys54/Cys154, and Cys129/Cys146. In terms of domain architecture, C-type lectin spans 33 to 155; the sequence is RNGVCNKLFP…CASLHPFICQ (123 aa). A Mannose-binding motif is present at residues 119–121; it reads EPN. Residues Glu127, Asn142, and Asp143 each contribute to the Ca(2+) site.

The protein belongs to the true venom lectin family. As to expression, expressed by the venom gland.

The protein resides in the secreted. Mannose-binding lectin which recognizes specific carbohydrate structures and agglutinates a variety of animal cells by binding to cell-surface glycoproteins and glycolipids. May be a calcium-dependent lectin. This is C-type lection lectoxin-Enh3 from Pseudoferania polylepis (Macleay's water snake).